We begin with the raw amino-acid sequence, 212 residues long: Large ribosomal subunit protein uL3 (212 aa).

Residues 136–155 show a composition bias toward polar residues; the sequence is THGNSLSHRSNGSIGQNQTP. Residues 136–157 form a disordered region; sequence THGNSLSHRSNGSIGQNQTPGR. N5-methylglutamine is present on Gln-153.

Belongs to the universal ribosomal protein uL3 family. Part of the 50S ribosomal subunit. Forms a cluster with proteins L14 and L19. Methylated by PrmB.

Its function is as follows. One of the primary rRNA binding proteins, it binds directly near the 3'-end of the 23S rRNA, where it nucleates assembly of the 50S subunit. The polypeptide is Large ribosomal subunit protein uL3 (Shewanella putrefaciens (strain CN-32 / ATCC BAA-453)).